A 136-amino-acid chain; its full sequence is Protein NrdI (136 aa).

This sequence belongs to the NrdI family.

Functionally, probably involved in ribonucleotide reductase function. The protein is Protein NrdI of Salmonella paratyphi A (strain ATCC 9150 / SARB42).